The chain runs to 104 residues: Large ribosomal subunit protein bL21 (104 aa).

This sequence belongs to the bacterial ribosomal protein bL21 family. Part of the 50S ribosomal subunit. Contacts protein L20.

Its function is as follows. This protein binds to 23S rRNA in the presence of protein L20. The sequence is that of Large ribosomal subunit protein bL21 from Granulibacter bethesdensis (strain ATCC BAA-1260 / CGDNIH1).